Consider the following 466-residue polypeptide: 3-isopropylmalate dehydratase large subunit (466 aa).

Residues Cys347, Cys407, and Cys410 each contribute to the [4Fe-4S] cluster site.

Belongs to the aconitase/IPM isomerase family. LeuC type 1 subfamily. In terms of assembly, heterodimer of LeuC and LeuD. The cofactor is [4Fe-4S] cluster.

The enzyme catalyses (2R,3S)-3-isopropylmalate = (2S)-2-isopropylmalate. It functions in the pathway amino-acid biosynthesis; L-leucine biosynthesis; L-leucine from 3-methyl-2-oxobutanoate: step 2/4. In terms of biological role, catalyzes the isomerization between 2-isopropylmalate and 3-isopropylmalate, via the formation of 2-isopropylmaleate. The protein is 3-isopropylmalate dehydratase large subunit of Shewanella pealeana (strain ATCC 700345 / ANG-SQ1).